We begin with the raw amino-acid sequence, 701 residues long: Ribosomal RNA large subunit methyltransferase K/L (701 aa).

In terms of domain architecture, THUMP spans 43–155 (LLYKSLMWSR…NNILHIMLDL (113 aa)).

It belongs to the methyltransferase superfamily. RlmKL family.

It localises to the cytoplasm. The enzyme catalyses guanosine(2445) in 23S rRNA + S-adenosyl-L-methionine = N(2)-methylguanosine(2445) in 23S rRNA + S-adenosyl-L-homocysteine + H(+). It carries out the reaction guanosine(2069) in 23S rRNA + S-adenosyl-L-methionine = N(2)-methylguanosine(2069) in 23S rRNA + S-adenosyl-L-homocysteine + H(+). Specifically methylates the guanine in position 2445 (m2G2445) and the guanine in position 2069 (m7G2069) of 23S rRNA. The sequence is that of Ribosomal RNA large subunit methyltransferase K/L from Buchnera aphidicola subsp. Acyrthosiphon pisum (strain APS) (Acyrthosiphon pisum symbiotic bacterium).